We begin with the raw amino-acid sequence, 736 residues long: Prolyl 3-hydroxylase 3 (736 aa).

The N-terminal stretch at 1-20 is a signal peptide; the sequence is MLRLLRPLLLLLLLPPPGSP. TPR repeat units lie at residues 37–70, 154–187, and 216–249; these read PDLL…QAAL, REPY…NPMH, and HWAA…SLAQ. Residues 253 to 275 form a disordered region; it reads CRADCEGPEEQQGAEEEEDGAAS. Positions 258–272 are enriched in acidic residues; it reads EGPEEQQGAEEEEDG. Residues 316-349 form a TPR 4 repeat; that stretch reads PNQLRRLHEAHAQVGNLSQAIENVLSVLLFYPED. N-linked (GlcNAc...) asparagine glycans are attached at residues Asn331 and Asn462. The region spanning 561–675 is the Fe2OG dioxygenase domain; the sequence is THLVCRSAIE…RCALALWHTW (115 aa). Residues His584, Asp586, and His656 each coordinate Fe cation. Residue Arg666 is part of the active site. Residues 681–709 are a coiled coil; that stretch reads EQEWIEAKELLQESQEEEEEEEEEMPSKD. The tract at residues 689–736 is disordered; the sequence is ELLQESQEEEEEEEEEMPSKDPSPEPPSRRHQRVQDKTGRAPRVREEL. A compositionally biased stretch (acidic residues) spans 694–704; it reads SQEEEEEEEEE. Residues 721 to 736 show a composition bias toward basic and acidic residues; it reads RVQDKTGRAPRVREEL. The Prevents secretion from ER motif lies at 733–736; the sequence is REEL.

Belongs to the leprecan family. As to quaternary structure, identified in a complex with PLOD1 and P3H4. It depends on Fe cation as a cofactor. L-ascorbate is required as a cofactor. In terms of tissue distribution, detected in fetal cartilage (at protein level). Weak expression in heart, lung, ovary and skeletal muscle.

The protein localises to the endoplasmic reticulum. It catalyses the reaction L-prolyl-[collagen] + 2-oxoglutarate + O2 = trans-3-hydroxy-L-prolyl-[collagen] + succinate + CO2. In terms of biological role, part of a complex composed of PLOD1, P3H3 and P3H4 that catalyzes hydroxylation of lysine residues in collagen alpha chains and is required for normal assembly and cross-linkling of collagen fibrils. Required for normal hydroxylation of lysine residues in type I collagen chains in skin, bone, tendon, aorta and cornea. Required for normal skin stability via its role in hydroxylation of lysine residues in collagen alpha chains and in collagen fibril assembly. Apparently not required for normal prolyl 3-hydroxylation on collagen chains, possibly because it functions redundantly with other prolyl 3-hydroxylases. This Homo sapiens (Human) protein is Prolyl 3-hydroxylase 3.